The primary structure comprises 910 residues: Leucine--tRNA ligase (910 aa).

Positions 42 to 52 match the 'HIGH' region motif; sequence PYPSGKLHMGH. The 'KMSKS' region motif lies at 658 to 662; it reads TMSKS. An ATP-binding site is contributed by K661.

It belongs to the class-I aminoacyl-tRNA synthetase family.

The protein localises to the cytoplasm. The catalysed reaction is tRNA(Leu) + L-leucine + ATP = L-leucyl-tRNA(Leu) + AMP + diphosphate. The chain is Leucine--tRNA ligase from Acidovorax sp. (strain JS42).